A 285-amino-acid polypeptide reads, in one-letter code: Bifunctional protein FolD (285 aa).

NADP(+) is bound by residues 164 to 166 (GRS), S193, and I234.

This sequence belongs to the tetrahydrofolate dehydrogenase/cyclohydrolase family. As to quaternary structure, homodimer.

The catalysed reaction is (6R)-5,10-methylene-5,6,7,8-tetrahydrofolate + NADP(+) = (6R)-5,10-methenyltetrahydrofolate + NADPH. It carries out the reaction (6R)-5,10-methenyltetrahydrofolate + H2O = (6R)-10-formyltetrahydrofolate + H(+). Its pathway is one-carbon metabolism; tetrahydrofolate interconversion. Functionally, catalyzes the oxidation of 5,10-methylenetetrahydrofolate to 5,10-methenyltetrahydrofolate and then the hydrolysis of 5,10-methenyltetrahydrofolate to 10-formyltetrahydrofolate. The chain is Bifunctional protein FolD from Desulfovibrio desulfuricans (strain ATCC 27774 / DSM 6949 / MB).